We begin with the raw amino-acid sequence, 468 residues long: 3-isopropylmalate dehydratase large subunit (468 aa).

[4Fe-4S] cluster-binding residues include Cys349, Cys409, and Cys412.

Belongs to the aconitase/IPM isomerase family. LeuC type 1 subfamily. As to quaternary structure, heterodimer of LeuC and LeuD. Requires [4Fe-4S] cluster as cofactor.

It carries out the reaction (2R,3S)-3-isopropylmalate = (2S)-2-isopropylmalate. It participates in amino-acid biosynthesis; L-leucine biosynthesis; L-leucine from 3-methyl-2-oxobutanoate: step 2/4. Functionally, catalyzes the isomerization between 2-isopropylmalate and 3-isopropylmalate, via the formation of 2-isopropylmaleate. The sequence is that of 3-isopropylmalate dehydratase large subunit from Shewanella baltica (strain OS185).